We begin with the raw amino-acid sequence, 447 residues long: Phosphoglucosamine mutase (447 aa).

The active-site Phosphoserine intermediate is serine 88. Positions 88, 231, 233, and 235 each coordinate Mg(2+). Residue serine 88 is modified to Phosphoserine.

The protein belongs to the phosphohexose mutase family. As to quaternary structure, monomer. Also forms large aggregates. It depends on Mg(2+) as a cofactor. In terms of processing, activated by phosphorylation. Glucose-1,6-bisphosphate or fructose-1,6-bisphosphate can activate the enzyme in vitro. However, since glucose-1,6-bisphosphate is not believed to form in methanogens, the physiologically relevant activator might be a serine kinase protein.

The enzyme catalyses alpha-D-glucosamine 1-phosphate = D-glucosamine 6-phosphate. Its function is as follows. Catalyzes the conversion of glucosamine-6-phosphate to glucosamine-1-phosphate. Also catalyzes the isomerization of glucose-1-phosphate to glucose-6-phosphate, but at a 5-fold lower rate. In Methanococcus maripaludis (strain DSM 14266 / JCM 13030 / NBRC 101832 / S2 / LL), this protein is Phosphoglucosamine mutase (glmM).